Consider the following 620-residue polypeptide: Glutathione-regulated potassium-efflux system protein KefC (620 aa).

Helical transmembrane passes span His-4 to Val-24, Leu-26 to Leu-46, Ser-54 to Leu-74, Gly-90 to Leu-110, Val-114 to Met-134, Phe-149 to Leu-169, Met-178 to Leu-198, Val-218 to Gly-238, Gly-270 to Leu-290, Leu-294 to Ile-314, Trp-327 to Gln-347, and Ser-359 to Asn-379. An RCK N-terminal domain is found at Gln-399 to Thr-518. Residues Gly-597 to Ser-620 form a disordered region.

This sequence belongs to the monovalent cation:proton antiporter 2 (CPA2) transporter (TC 2.A.37) family. KefC subfamily. Homodimer. Interacts with the regulatory subunit KefF.

It is found in the cell inner membrane. Its function is as follows. Pore-forming subunit of a potassium efflux system that confers protection against electrophiles. Catalyzes K(+)/H(+) antiport. The protein is Glutathione-regulated potassium-efflux system protein KefC of Escherichia coli O127:H6 (strain E2348/69 / EPEC).